The sequence spans 380 residues: Succinyl-diaminopimelate desuccinylase (380 aa).

Histidine 69 is a Zn(2+) binding site. Aspartate 71 is an active-site residue. Zn(2+) is bound at residue aspartate 102. The active-site Proton acceptor is glutamate 135. Zn(2+) contacts are provided by glutamate 136, glutamate 164, and histidine 353.

It belongs to the peptidase M20A family. DapE subfamily. In terms of assembly, homodimer. The cofactor is Zn(2+). Co(2+) serves as cofactor.

The enzyme catalyses N-succinyl-(2S,6S)-2,6-diaminopimelate + H2O = (2S,6S)-2,6-diaminopimelate + succinate. It functions in the pathway amino-acid biosynthesis; L-lysine biosynthesis via DAP pathway; LL-2,6-diaminopimelate from (S)-tetrahydrodipicolinate (succinylase route): step 3/3. Catalyzes the hydrolysis of N-succinyl-L,L-diaminopimelic acid (SDAP), forming succinate and LL-2,6-diaminopimelate (DAP), an intermediate involved in the bacterial biosynthesis of lysine and meso-diaminopimelic acid, an essential component of bacterial cell walls. This chain is Succinyl-diaminopimelate desuccinylase, found in Cereibacter sphaeroides (strain KD131 / KCTC 12085) (Rhodobacter sphaeroides).